Reading from the N-terminus, the 98-residue chain is Large ribosomal subunit protein uL23 (98 aa).

Belongs to the universal ribosomal protein uL23 family. In terms of assembly, part of the 50S ribosomal subunit. Contacts protein L29, and trigger factor when it is bound to the ribosome.

Functionally, one of the early assembly proteins it binds 23S rRNA. One of the proteins that surrounds the polypeptide exit tunnel on the outside of the ribosome. Forms the main docking site for trigger factor binding to the ribosome. The polypeptide is Large ribosomal subunit protein uL23 (Rickettsia typhi (strain ATCC VR-144 / Wilmington)).